Here is a 397-residue protein sequence, read N- to C-terminus: Acetate kinase (397 aa).

Position 7 (Asn7) interacts with Mg(2+). Residue Lys14 participates in ATP binding. Arg91 contacts substrate. Asp148 serves as the catalytic Proton donor/acceptor. ATP-binding positions include 208–212 (HLGNG), 283–285 (DFR), and 331–335 (GLGEN). Glu383 serves as a coordination point for Mg(2+).

Belongs to the acetokinase family. As to quaternary structure, homodimer. It depends on Mg(2+) as a cofactor. The cofactor is Mn(2+).

Its subcellular location is the cytoplasm. The catalysed reaction is acetate + ATP = acetyl phosphate + ADP. It participates in metabolic intermediate biosynthesis; acetyl-CoA biosynthesis; acetyl-CoA from acetate: step 1/2. Catalyzes the formation of acetyl phosphate from acetate and ATP. Can also catalyze the reverse reaction. This Heliobacterium modesticaldum (strain ATCC 51547 / Ice1) protein is Acetate kinase.